We begin with the raw amino-acid sequence, 347 residues long: NADH-ubiquinone oxidoreductase chain 2 (347 aa).

The next 11 helical transmembrane spans lie at 3–23, 25–45, 59–79, 96–116, 122–142, 149–169, 178–198, 201–221, 237–257, 274–294, and 326–346; these read PLIFTMILLTVMLGTAIVMTT, HWVMAWIGFEMNMLAIIPILM, YFLTQATASMLLMLAIVINLT, IIMTLAMAMKLGLAPFHFWVP, VQLSSGLILLTWQKLAPMSIL, INLDLLLLMSILSILVGGWGG, ILAYSSIAHMGWMTAIMVYNP, ALLNLAIYILLTTTTFVMLMV, MPLLTTAILTIMLSLGGLPPL, DSMITPTIMAVMTLLNLYFYM, and LSPLIILSTLILPLSPMLALL.

This sequence belongs to the complex I subunit 2 family. In terms of assembly, core subunit of respiratory chain NADH dehydrogenase (Complex I) which is composed of 45 different subunits. Interacts with TMEM242.

Its subcellular location is the mitochondrion inner membrane. It carries out the reaction a ubiquinone + NADH + 5 H(+)(in) = a ubiquinol + NAD(+) + 4 H(+)(out). Functionally, core subunit of the mitochondrial membrane respiratory chain NADH dehydrogenase (Complex I) which catalyzes electron transfer from NADH through the respiratory chain, using ubiquinone as an electron acceptor. Essential for the catalytic activity and assembly of complex I. The sequence is that of NADH-ubiquinone oxidoreductase chain 2 from Nyctimene aello (Broad-striped tube-nosed fruit bat).